We begin with the raw amino-acid sequence, 200 residues long: ADP-ribosylation factor-like protein 4A (200 aa).

Gly-2 is lipidated: N-myristoyl glycine. Residues 27 to 34 (GLDCAGKT), 75 to 79 (DVGGQ), and 134 to 137 (NKQD) contribute to the GTP site.

Belongs to the small GTPase superfamily. Arf family. As to quaternary structure, interacts with CYTH2. Interacts with KPNA2; the interaction is direct. Does not interact with ARL4A. In terms of processing, myristoylated.

The protein resides in the cell membrane. Its subcellular location is the cytoplasm. It is found in the nucleus. It localises to the nucleolus. Small GTP-binding protein which cycles between an inactive GDP-bound and an active GTP-bound form, and the rate of cycling is regulated by guanine nucleotide exchange factors (GEF) and GTPase-activating proteins (GAP). GTP-binding protein that does not act as an allosteric activator of the cholera toxin catalytic subunit. Recruits CYTH1, CYTH2, CYTH3 and CYTH4 to the plasma membrane in GDP-bound form. This Homo sapiens (Human) protein is ADP-ribosylation factor-like protein 4A (ARL4A).